Here is a 387-residue protein sequence, read N- to C-terminus: MERPPPRAAGRDPSALRAEAPWLRAEGPGPRAAPVTVPTPPQGSSVGGGFAGLEFARPQESEPRASDLGAPRTWTGAAAGPRTPSAHIPVPAQRATPGKARLDEVMAAAALTSLSTSPLLLGAPVAAFSPEPGLEPWKEALVRPPGSYSSSSNSGDWGWDLASDQSSPSTPSPPLPPEAAHFLFGEPTLRKRKSPAQVMFQCLWKSCGKVLSTASAMQRHIRLVHLGRQAEPEQSDGEEDFYYTELDVGVDTLTDGLSSLTPVSPTASMPPAFPRLELPELLEPPALPSPLRPPAPPLPPPPVLSTVANPQSCHSDRVYQGCLTPARLEPQPTEVGACPPALSSRIGVTLRKPRGDAKKCRKVYGMERRDLWCTACRWKKACQRFLD.

2 disordered regions span residues 1-97 (MERP…RATP) and 139-179 (EALV…PPEA). Positions 27–36 (GPGPRAAPVT) are enriched in low complexity. A C2H2-type zinc finger spans residues 200–225 (FQCLWKSCGKVLSTASAMQRHIRLVH). Residues 253–263 (LTDGLSSLTPV) carry the Nuclear export signal motif. Phosphoserine occurs at positions 264 and 268. The disordered stretch occupies residues 283–305 (EPPALPSPLRPPAPPLPPPPVLS). The segment covering 285–303 (PALPSPLRPPAPPLPPPPV) has biased composition (pro residues). The short motif at 351-354 (RKPR) is the Nuclear localization signal element.

In terms of assembly, interacts with MEF2A. As to expression, according to PubMed:14630949, expressed in heart, skeletal muscle, liver, kidney and pancreas; undetectable in lung, placenta or brain. According to PubMed:14625278, ubiquitously expressed, with lowest expression in brain and ileum.

It is found in the cytoplasm. It localises to the nucleus. In terms of biological role, transcription factor involved in SLC2A4 and HD gene transactivation. Binds to the consensus sequence 5'-GCCGGCG-3'. The sequence is that of SLC2A4 regulator (SLC2A4RG) from Homo sapiens (Human).